Reading from the N-terminus, the 191-residue chain is Holliday junction branch migration complex subunit RuvA (191 aa).

The domain I stretch occupies residues 1 to 64 (MIGKLTGTLL…EDAQLLYGFA (64 aa)). A domain II region spans residues 65-140 (TAPERQAFRA…KLGADLGASH (76 aa)). Residues 140–142 (HGP) are flexible linker. A domain III region spans residues 143–191 (AVSGAQADILQALLALGYNDKEAAAALKALPAQVEVSDGIKWALKALTK).

It belongs to the RuvA family. Homotetramer. Forms an RuvA(8)-RuvB(12)-Holliday junction (HJ) complex. HJ DNA is sandwiched between 2 RuvA tetramers; dsDNA enters through RuvA and exits via RuvB. An RuvB hexamer assembles on each DNA strand where it exits the tetramer. Each RuvB hexamer is contacted by two RuvA subunits (via domain III) on 2 adjacent RuvB subunits; this complex drives branch migration. In the full resolvosome a probable DNA-RuvA(4)-RuvB(12)-RuvC(2) complex forms which resolves the HJ.

Its subcellular location is the cytoplasm. Its function is as follows. The RuvA-RuvB-RuvC complex processes Holliday junction (HJ) DNA during genetic recombination and DNA repair, while the RuvA-RuvB complex plays an important role in the rescue of blocked DNA replication forks via replication fork reversal (RFR). RuvA specifically binds to HJ cruciform DNA, conferring on it an open structure. The RuvB hexamer acts as an ATP-dependent pump, pulling dsDNA into and through the RuvAB complex. HJ branch migration allows RuvC to scan DNA until it finds its consensus sequence, where it cleaves and resolves the cruciform DNA. This Verminephrobacter eiseniae (strain EF01-2) protein is Holliday junction branch migration complex subunit RuvA.